The primary structure comprises 138 residues: Vesicle transport protein GOT1B (138 aa).

Position 1 is an N-acetylmethionine (M1). The Cytoplasmic portion of the chain corresponds to 1 to 9; it reads MISLTDTQK. A helical transmembrane segment spans residues 10–30; the sequence is IGMGLTGFGVFFLFFGMILFF. At 31–32 the chain is on the lumenal side; that stretch reads DK. Residues 33–53 form a helical membrane-spanning segment; it reads ALLAIGNVLFVAGLAFVIGLE. The Cytoplasmic portion of the chain corresponds to 54–68; sequence RTFRFFFQKHKMKAT. Residues 69–89 form a helical membrane-spanning segment; the sequence is GFFLGGVFVVLIGWPLIGMIF. A topological domain (lumenal) is located at residue E90. Residues 91–109 form a helical membrane-spanning segment; sequence IYGFFLLFRGFFPVVVGFI. The Cytoplasmic segment spans residues 110–138; sequence RRVPVLGSLLNLPGIRSFVDKVGESNNMV.

Belongs to the GOT1 family.

The protein resides in the golgi apparatus membrane. May be involved in fusion of ER-derived transport vesicles with the Golgi complex. The protein is Vesicle transport protein GOT1B of Bos taurus (Bovine).